The following is a 67-amino-acid chain: Large ribosomal subunit protein eL24 (67 aa).

Zn(2+)-binding residues include Cys-7, Cys-10, Cys-33, and Cys-37. The C4-type zinc-finger motif lies at 7–37; sequence CSYCGKPFEPGTGKMFVRNDGRVLFFCSRKC.

The protein belongs to the eukaryotic ribosomal protein eL24 family. As to quaternary structure, part of the 50S ribosomal subunit. Forms a cluster with proteins L3 and L14. Requires Zn(2+) as cofactor.

Functionally, binds to the 23S rRNA. In Pyrococcus abyssi (strain GE5 / Orsay), this protein is Large ribosomal subunit protein eL24.